The following is a 129-amino-acid chain: RxLR effector protein SFI6 (129 aa).

The first 16 residues, 1–16 (MTLVVLATGLLASGTA), serve as a signal peptide directing secretion. A RxLR-dEER motif is present at residues 42–64 (RFLRSHQITDDKVEINEHGEEER).

The protein belongs to the RxLR effector family.

The protein resides in the secreted. It localises to the host cytoplasm. The protein localises to the host cell membrane. Effector that suppresses flg22-induced post-translational MAP kinase activation in tomato but not in Arabidopsis. The perception of highly conserved pathogen- or microbe-associated molecular patterns (PAMPs/MAMPs), such as flg22, triggers converging signaling pathways recruiting MAP kinase cascades and inducing transcriptional re-programming, yielding a generic antimicrobial response. The polypeptide is RxLR effector protein SFI6 (Phytophthora infestans (strain T30-4) (Potato late blight agent)).